Here is a 410-residue protein sequence, read N- to C-terminus: Lysosome-associated membrane glycoprotein 2 (410 aa).

A signal peptide spans 1–28 (MVCFRLFPVPGSGLVLVCLVLGAVRSYA). The tract at residues 29-192 (LELNLTDSEN…STNEFLCDKD (164 aa)) is first lumenal domain. At 29-375 (LELNLTDSEN…QDCSADDDNF (347 aa)) the chain is on the lumenal side. 2 N-linked (GlcNAc...) (polylactosaminoglycan) asparagine glycosylation sites follow: N32 and N38. The cysteines at positions 41 and 79 are disulfide-linked. 6 N-linked (GlcNAc...) asparagine glycosylation sites follow: N49, N58, N75, N101, N123, and N179. C153 and C189 are disulfide-bonded. Residues 193-228 (KTSTVAPTIHTTVPSPTTTPTPKEKPEAGTYSVNNG) are hinge. O-linked (GalNAc...) serine glycosylation is present at S195. O-linked (GalNAc...) threonine glycosylation is found at T196, T200, T203, and T204. A compositionally biased stretch (low complexity) spans 199 to 213 (PTIHTTVPSPTTTPT). The interval 199–221 (PTIHTTVPSPTTTPTPKEKPEAG) is disordered. S207 carries an O-linked (GalNAc...) serine; partial glycan. O-linked (GalNAc...) threonine; partial glycosylation occurs at T209. Residues T210 and T211 are each glycosylated (O-linked (GalNAc...) threonine). T213 carries O-linked (GalNAc...) threonine; partial glycosylation. N229, N242, N257, N275, and N300 each carry an N-linked (GlcNAc...) asparagine glycan. Residues 229-375 (NDTCLLATMG…QDCSADDDNF (147 aa)) are second lumenal domain. Cysteines 232 and 265 form a disulfide. Residue N307 is glycosylated (N-linked (GlcNAc...) (polylactosaminoglycan) asparagine). 2 N-linked (GlcNAc...) asparagine glycosylation sites follow: N317 and N356. C331 and C368 are joined by a disulfide. A helical membrane pass occupies residues 376 to 399 (LVPIAVGAALAGVLILVLLAYFIG). Over 400–410 (LKHHHAGYEQF) the chain is Cytoplasmic. An important for binding and subsequent lysosomal degradation of target proteins region spans residues 401–404 (KHHH).

This sequence belongs to the LAMP family. As to quaternary structure, monomer. Homodimer. Homotrimer. Forms large homooligomers. Interacts (via its cytoplasmic region) with HSPA8; HSPA8 mediates recruitment of proteins with a KFERQ motif to the surface of the lysosome for chaperone-mediated autophagy. Interacts with HSP90 in the lysosome lumen; this enhances LAMP2 stability. Interacts with MLLT11. Interacts with ABCB9. Interacts with FURIN. Interacts with CT55; this interaction may be important for LAMP2 protein stability. Interacts with TMEM175; inhibiting the proton channel activity of TMEM175. Forms a ternary complex with RAB7A and RUFY4 (via RUN domain); the interaction with RAB7A is mediated by RUFY4 (via RUN and coiled coil domains). (Microbial infection) Interacts with mumps virus protein F; this interaction promotes protein F cleavage by FURIN. In terms of processing, O- and N-glycosylated; some of the 16 N-linked glycans are polylactosaminoglycans. As to expression, isoform LAMP-2A is highly expressed in placenta, lung and liver, less in kidney and pancreas, low in brain and skeletal muscle. Isoform LAMP-2B is detected in spleen, thymus, prostate, testis, small intestine, colon, skeletal muscle, brain, placenta, lung, kidney, ovary and pancreas and liver. Isoform LAMP-2C is detected in small intestine, colon, heart, brain, skeletal muscle, and at lower levels in kidney and placenta.

Its subcellular location is the lysosome membrane. The protein resides in the endosome membrane. It localises to the cell membrane. It is found in the cytoplasmic vesicle. The protein localises to the autophagosome membrane. Functionally, lysosomal membrane glycoprotein which plays an important role in lysosome biogenesis, lysosomal pH regulation and autophagy. Acts as an important regulator of lysosomal lumen pH regulation by acting as a direct inhibitor of the proton channel TMEM175, facilitating lysosomal acidification for optimal hydrolase activity. Plays an important role in chaperone-mediated autophagy, a process that mediates lysosomal degradation of proteins in response to various stresses and as part of the normal turnover of proteins with a long biological half-live. Functions by binding target proteins, such as GAPDH, NLRP3 and MLLT11, and targeting them for lysosomal degradation. In the chaperone-mediated autophagy, acts downstream of chaperones, such as HSPA8/HSC70, which recognize and bind substrate proteins and mediate their recruitment to lysosomes, where target proteins bind LAMP2. Plays a role in lysosomal protein degradation in response to starvation. Required for the fusion of autophagosomes with lysosomes during autophagy. Cells that lack LAMP2 express normal levels of VAMP8, but fail to accumulate STX17 on autophagosomes, which is the most likely explanation for the lack of fusion between autophagosomes and lysosomes. Required for normal degradation of the contents of autophagosomes. Required for efficient MHC class II-mediated presentation of exogenous antigens via its function in lysosomal protein degradation; antigenic peptides generated by proteases in the endosomal/lysosomal compartment are captured by nascent MHC II subunits. Is not required for efficient MHC class II-mediated presentation of endogenous antigens. In terms of biological role, modulates chaperone-mediated autophagy. Decreases presentation of endogenous antigens by MHCII. Does not play a role in the presentation of exogenous and membrane-derived antigens by MHCII. Its function is as follows. (Microbial infection) Supports the FURIN-mediated cleavage of mumps virus fusion protein F by interacting with both FURIN and the unprocessed form but not the processed form of the viral protein F. The protein is Lysosome-associated membrane glycoprotein 2 (LAMP2) of Homo sapiens (Human).